We begin with the raw amino-acid sequence, 197 residues long: MTHEPHPGAGAERGIMVVVVGPSGAGKDTLMNLAARHFSGRADVHFTRRVITRHRGAGGEDHLSVSLQGFAAMEQSGSFAVWWEAHGLKYGIPAEVSVALSKGHIVVANGSRSALHRFQAAFPRLKVINVTASAEVLAGRLEARGRETHEDIMARLARGPLTVRGDYDVTELDNSGSIEEAEQKMIAILDGLLAEVH.

21–28 (GPSGAGKD) is a binding site for ATP.

It belongs to the ribose 1,5-bisphosphokinase family.

The catalysed reaction is alpha-D-ribose 1,5-bisphosphate + ATP = 5-phospho-alpha-D-ribose 1-diphosphate + ADP. It functions in the pathway metabolic intermediate biosynthesis; 5-phospho-alpha-D-ribose 1-diphosphate biosynthesis; 5-phospho-alpha-D-ribose 1-diphosphate from D-ribose 5-phosphate (route II): step 3/3. Catalyzes the phosphorylation of ribose 1,5-bisphosphate to 5-phospho-D-ribosyl alpha-1-diphosphate (PRPP). The sequence is that of Ribose 1,5-bisphosphate phosphokinase PhnN from Rhizobium etli (strain CIAT 652).